The chain runs to 102 residues: Death-associated protein 1 (102 aa).

Positions 1-102 (MSSPPEGKLE…RTQHIQQPRK (102 aa)) are disordered. S2 is subject to N-acetylserine. Phosphoserine; by MTOR is present on S3. K29 carries the N6-acetyllysine modification. Positions 32-43 (HTGDTKEEKDKD) are enriched in basic and acidic residues. At S49 the chain carries Phosphoserine. S51 carries the phosphoserine; by MTOR modification. Residue S91 is modified to Phosphoserine. Residues 92–102 (PRTQHIQQPRK) show a composition bias toward polar residues.

This sequence belongs to the DAP-DAPL1 family. As to quaternary structure, associates with ribosomes; inhibiting translation. Interacts with eiF5a (EIF5A and EIF5A2); inhibiting translation. In terms of processing, phosphorylated. Phosphorylation by MTOR inhibits the suppressive activity of DAP toward autophagy.

In terms of biological role, ribosome-binding protein involved in ribosome hibernation, a process during which ribosomes are stabilized in an inactive state and preserved from proteasomal degradation. Acts via its association with eiF5a (EIF5A and EIF5A2) at the polypeptide exit tunnel of the ribosome, preventing mRNA translation. Involved in ribosome hibernation in the mature oocyte by preventing mRNA translation, leading to ribosome inactivation. Ribosomes, which are produced in large quantities during oogenesis, are stored and translationally repressed in the oocyte and early embryo. Also acts as a negative regulator of autophagy. Involved in mediating interferon-gamma-induced cell death. The polypeptide is Death-associated protein 1 (Homo sapiens (Human)).